Here is a 1184-residue protein sequence, read N- to C-terminus: Fibulin-2 (1184 aa).

The N-terminal stretch at 1-27 (MVLLWEPAGAWLALGLALALGPSVAAA) is a signal peptide. Residues 28 to 177 (APRQDCTGVE…ELICYQLPGC (150 aa)) are subdomain NA (Cys-rich). The interval 28–444 (APRQDCTGVE…EGSTKDLIET (417 aa)) is n. Residues 178–444 (HGNFSDAEEG…EGSTKDLIET (267 aa)) are subdomain NB (Cys-free). An N-linked (GlcNAc...) asparagine glycan is attached at asparagine 180. Disordered stretches follow at residues 221 to 293 (VQAG…MAVT) and 399 to 437 (IPPT…PEGS). The span at 224 to 236 (GAGGPPAALGGGS) shows a compositional bias: gly residues. A compositionally biased stretch (low complexity) spans 252–261 (PRPTAAAALG). Residues 276–288 (DSEEEEEEEEERE) are compositionally biased toward acidic residues. Serine 277 carries the post-translational modification Phosphoserine. The span at 423–436 (PNSVHSIPRSSPEG) shows a compositional bias: polar residues. 38 disulfides stabilise this stretch: cysteine 445/cysteine 472, cysteine 446/cysteine 479, cysteine 459/cysteine 480, cysteine 489/cysteine 518, cysteine 502/cysteine 519, cysteine 521/cysteine 545, cysteine 522/cysteine 552, cysteine 535/cysteine 553, cysteine 608/cysteine 620, cysteine 616/cysteine 629, cysteine 631/cysteine 644, cysteine 683/cysteine 693, cysteine 689/cysteine 702, cysteine 704/cysteine 717, cysteine 723/cysteine 736, cysteine 730/cysteine 745, cysteine 751/cysteine 762, cysteine 768/cysteine 781, cysteine 775/cysteine 790, cysteine 796/cysteine 808, cysteine 814/cysteine 827, cysteine 821/cysteine 836, cysteine 843/cysteine 856, cysteine 862/cysteine 875, cysteine 869/cysteine 884, cysteine 886/cysteine 899, cysteine 905/cysteine 917, cysteine 913/cysteine 926, cysteine 928/cysteine 941, cysteine 947/cysteine 956, cysteine 952/cysteine 965, cysteine 967/cysteine 980, cysteine 986/cysteine 998, cysteine 994/cysteine 1007, cysteine 1009/cysteine 1023, cysteine 1029/cysteine 1042, cysteine 1036/cysteine 1051, and cysteine 1056/cysteine 1068. Anaphylatoxin-like domains lie at 445–480 (CCAA…RHCC), 488–519 (SCMA…KQCC), and 521–553 (CCGL…LSCC). Residue asparagine 507 is glycosylated (N-linked (GlcNAc...) asparagine). The 42-residue stretch at 604–645 (DQDECLLLPGELCQHLCINTVGSYHCACFPGFSLQDDGRTCR) folds into the EGF-like 1; calcium-binding domain. Residues 679 to 718 (QPNTCKDNGPCKQVCSTVGGSAICSCFPGYAIMADGVSCE) form the EGF-like 2 domain. Residues 719-763 (DINECVTDLHTCSRGEHCVNTLGSFHCYKALTCEPGYALKDGECE) enclose the EGF-like 3; calcium-binding domain. The 46-residue stretch at 764–809 (DVDECAMGTHTCQPGFLCQNTKGSFYCQARQRCMDGFLQDPEGNCV) folds into the EGF-like 4; calcium-binding domain. The EGF-like 5; calcium-binding domain maps to 810 to 857 (DINECTSLSEPCRPGFSCINTVGSYTCQRNPLICARGYHASDDGTKCV). The region spanning 858–900 (DVNECETGVHRCGEGQVCHNLPGSYRCDCKAGFQRDAFGRGCI) is the EGF-like 6; calcium-binding domain. One can recognise an EGF-like 7; calcium-binding domain in the interval 901–942 (DVNECWASPGRLCQHTCENTLGSYRCSCASGFLLAADGKRCE). In terms of domain architecture, EGF-like 8; calcium-binding spans 943–981 (DVNECEAQRCSQECANIYGSYQCYCRQGYQLAEDGHTCT). One can recognise an EGF-like 9; calcium-binding domain in the interval 982-1024 (DIDECAQGAGILCTFRCLNVPGSYQCACPEQGYTMTANGRSCK). The region spanning 1025–1069 (DVDECALGTHNCSEAETCHNIQGSFRCLRFECPPNYVQVSKTKCE) is the EGF-like 10; calcium-binding domain. Asparagine 1035 carries N-linked (GlcNAc...) asparagine glycosylation. The domain III stretch occupies residues 1070–1184 (RTTCHDFLEC…MHIFFTTFAL (115 aa)).

This sequence belongs to the fibulin family. In terms of assembly, homotrimer; disulfide-linked. Interacts with LAMA2. Interacts with FBN1 (via N-terminal domain). Forms a ternary complex with ELN and FBN1. O-glycosylated with core 1 or possibly core 8 glycans. It is unsure if the O-glycosylation is on Thr-347 or Ser-348. Component of both basement membranes and other connective tissues. Expressed in heart, placenta and ovary.

The protein resides in the secreted. It is found in the extracellular space. Its subcellular location is the extracellular matrix. Functionally, its binding to fibronectin and some other ligands is calcium dependent. May act as an adapter that mediates the interaction between FBN1 and ELN. The sequence is that of Fibulin-2 (FBLN2) from Homo sapiens (Human).